Reading from the N-terminus, the 456-residue chain is Gamma-aminobutyric acid receptor subunit alpha-1 (456 aa).

An N-terminal signal peptide occupies residues 1–27; it reads MRKSPGLSDCLWAWILLLSTLTGRSYG. The Extracellular segment spans residues 28–253; the sequence is QPSLQDELKD…FHLKRKIGYF (226 aa). N38 is a glycosylation site (N-linked (GlcNAc...) asparagine). R94 is a binding site for 4-aminobutanoate. The N-linked (GlcNAc...) asparagine glycan is linked to N138. Position 157 (T157) interacts with 4-aminobutanoate. A disulfide bridge connects residues C166 and C180. The chain crosses the membrane as a helical span at residues 254-274; it reads VIQTYLPCIMTVILSQVSFWL. W273 is a 3alpha-hydroxy-5alpha-pregnan-11,20-dione binding site. Over 275 to 279 the chain is Cytoplasmic; it reads NRESV. The chain crosses the membrane as a helical span at residues 280-301; that stretch reads PARTVFGVTTVLTMTTLSISAR. The Extracellular portion of the chain corresponds to 302–311; it reads NSLPKVAYAT. Residues 312 to 333 traverse the membrane as a helical segment; that stretch reads AMDWFIAVCYAFVFSALIEFAT. At 334–421 the chain is on the cytoplasmic side; it reads VNYFTKRGYA…TFNSVSKIDR (88 aa). Residues 422-441 traverse the membrane as a helical segment; sequence LSRIAFPLLFGIFNLVYWAT. Residues 442–456 lie on the Extracellular side of the membrane; that stretch reads YLNREPQLKAPTPHQ.

Belongs to the ligand-gated ion channel (TC 1.A.9) family. Gamma-aminobutyric acid receptor (TC 1.A.9.5) subfamily. GABRA1 sub-subfamily. In terms of assembly, heteropentamer, formed by a combination of alpha (GABRA1-6), beta (GABRB1-3), gamma (GABRG1-3), delta (GABRD), epsilon (GABRE), rho (GABRR1-3), pi (GABRP) and theta (GABRQ) subunits, each subunit exhibiting distinct physiological and pharmacological properties. Interacts with UBQLN1. Interacts with TRAK1. Interacts with KIF21B. Identified in a complex of 720 kDa composed of LHFPL4, NLGN2, GABRA1, GABRB2, GABRG2 and GABRB3. Interacts with LHFPL4. Interacts with NLGN2. Interacts with SHISA7; interaction leads regulation of GABAAR trafficking, channel deactivation kinetics and pharmacology.

The protein resides in the postsynaptic cell membrane. It localises to the cell membrane. The protein localises to the cytoplasmic vesicle membrane. It catalyses the reaction chloride(in) = chloride(out). Its activity is regulated as follows. Allosterically activated by benzodiazepines and the anesthetic alphaxalone. Allosterically activated by pentobarbital. Inhibited by the antagonist bicuculline. Potentiated by histamine. Its function is as follows. Alpha subunit of the heteropentameric ligand-gated chloride channel gated by Gamma-aminobutyric acid (GABA), a major inhibitory neurotransmitter in the brain. GABA-gated chloride channels, also named GABA(A) receptors (GABAAR), consist of five subunits arranged around a central pore and contain GABA active binding site(s) located at the alpha and beta subunit interface(s). When activated by GABA, GABAARs selectively allow the flow of chloride anions across the cell membrane down their electrochemical gradient. Alpha-1/GABRA1-containing GABAARs are largely synaptic. Chloride influx into the postsynaptic neuron following GABAAR opening decreases the neuron ability to generate a new action potential, thereby reducing nerve transmission. GABAARs containing alpha-1 and beta-2 or -3 subunits exhibit synaptogenic activity; the gamma-2 subunit being necessary but not sufficient to induce rapid synaptic contacts formation. GABAARs function also as histamine receptor where histamine binds at the interface of two neighboring beta subunits and potentiates GABA response. GABAARs containing alpha, beta and epsilon subunits also permit spontaneous chloride channel activity while preserving the structural information required for GABA-gated openings. Alpha-1-mediated plasticity in the orbitofrontal cortex regulates context-dependent action selection. Together with rho subunits, may also control neuronal and glial GABAergic transmission in the cerebellum. The sequence is that of Gamma-aminobutyric acid receptor subunit alpha-1 from Homo sapiens (Human).